Consider the following 854-residue polypeptide: SH2 domain-containing protein 3C (854 aa).

The residue at position 22 (serine 22) is a Phosphoserine. Residues arginine 34 to serine 43 show a composition bias toward low complexity. Positions arginine 34–alanine 129 are disordered. A compositionally biased stretch (basic and acidic residues) spans glutamate 99 to glycine 124. In terms of domain architecture, SH2 spans tryptophan 215–valine 314. Phosphotyrosine occurs at positions 273 and 278. Disordered regions lie at residues serine 330–serine 384, leucine 398–valine 417, and alanine 422–lysine 520. The span at serine 333–glycine 347 shows a compositional bias: low complexity. Serine 354 is modified (phosphoserine). 3 stretches are compositionally biased toward low complexity: residues serine 400–serine 415, alanine 422–proline 436, and serine 474–proline 485. Phosphoserine is present on serine 435. Over residues threonine 508–lysine 520 the composition is skewed to basic and acidic residues. One can recognise a Ras-GEF domain in the interval aspartate 580–alanine 848. Tyrosine 787 carries the phosphotyrosine modification.

Component of a complex comprised of SH2D3C, BCAR1/CAS, and CRK. Within the complex, interacts with CRK and (via C-terminus) with BCAR1/CAS (via C-terminus). Interacts with NEDD9/HEF1. Interacts with EPHB2. As to quaternary structure, interacts with NEDD9/HEF1. Interacts with BCAR1/CAS. Interacts with PTK2B. In terms of assembly, interacts (via C-terminus) with BCAR1/CAS (via C-terminus). Interacts with IGF1. Post-translationally, phosphorylated by MAPK/ERK upon T-cell receptor stimulation in T-cells. As to expression, expressed in the olfactory bulb and olfactory sensory neurons (at protein level). Expressed in B cells (at protein level). Expressed in T lymphocytes. Expressed in hematopoietic cells from spleen, lymph node and thymus (at protein level). Expressed weakly in the lung (at protein level). In terms of tissue distribution, expressed in the brain, lung, kidney, and weakly expressed in the liver and lung (at protein level).

It localises to the cytoplasm. The protein localises to the cell membrane. It is found in the cell projection. Its subcellular location is the axon. The protein resides in the ruffle membrane. Functionally, acts as an adapter protein that mediates cell signaling pathways involved in cellular functions such as cell adhesion and migration, tissue organization, and the regulation of the immune response. Plays a role in integrin-mediated cell adhesion through BCAR1-CRK-RAPGEF1 signaling and activation of the small GTPase RAP1. Promotes cell migration and invasion through the extracellular matrix. Required for marginal zone B-cell development and thymus-independent type 2 immune responses. Mediates migration and adhesion of B cells in the splenic marginal zone via promoting hyperphosphorylation of NEDD9/CASL. Plays a role in CXCL13-induced chemotaxis of B-cells. Plays a role in the migration of olfactory sensory neurons (OSNs) into the forebrain and the innervation of the olfactory bulb by the OSN axons during development. Required for the efficient tyrosine phosphorylation of BCAR1 in OSN axons. Its function is as follows. Important regulator of chemokine-induced, integrin-mediated T lymphocyte adhesion and migration, acting upstream of RAP1. Required for tissue-specific adhesion of T lymphocytes to peripheral tissues. Required for basal and CXCL2 stimulated serine-threonine phosphorylation of NEDD9. May be involved in the regulation of T-cell receptor-mediated IL2 production through the activation of the JNK pathway in T-cells. In terms of biological role, may be involved in the BCAR1/CAS-mediated JNK activation pathway. The chain is SH2 domain-containing protein 3C (Sh2d3c) from Mus musculus (Mouse).